We begin with the raw amino-acid sequence, 511 residues long: Limonoid UDP-glucosyltransferase (511 aa).

The active-site Proton acceptor is H19. H19 is an an anthocyanidin binding site. The UDP-alpha-D-glucose site is built by Q344, H359, W362, N363, S364, and E367. G382 provides a ligand contact to an anthocyanidin. Residues D383 and Q384 each contribute to the UDP-alpha-D-glucose site.

It belongs to the UDP-glycosyltransferase family.

The enzyme catalyses limonin + UDP-alpha-D-glucose + H2O = limonin 17-beta-D-glucoside + UDP + 2 H(+). Involved in the glucosylation of limonoids. The polypeptide is Limonoid UDP-glucosyltransferase (Citrus unshiu (Satsuma mandarin)).